Here is a 235-residue protein sequence, read N- to C-terminus: C-type lectin domain family 2 member D-related protein (235 aa).

Residues 1–50 (MPSSAHLQDPPPHLSRTLTQDEEQTSLRQSSSCGPSTTSASASESLSGST) are disordered. At 1–75 (MPSSAHLQDP…KIIPTESAAK (75 aa)) the chain is on the cytoplasmic side. The span at 30–50 (SSSCGPSTTSASASESLSGST) shows a compositional bias: low complexity. A helical; Signal-anchor for type II membrane protein transmembrane segment spans residues 76-96 (LLCCYAVFMALTVVVIALSIA). Topologically, residues 97 to 235 (LSVKKTPQIS…KLNSYTSQCP (139 aa)) are extracellular. The C-type lectin domain occupies 121–232 (FGNKCYYFNE…ICSKLNSYTS (112 aa)). Asn-134 carries N-linked (GlcNAc...) asparagine glycosylation.

It localises to the cell membrane. Its function is as follows. Lectin-type cell surface receptor. The protein is C-type lectin domain family 2 member D-related protein of Rattus norvegicus (Rat).